We begin with the raw amino-acid sequence, 239 residues long: ATP synthase subunit b (239 aa).

Over residues 1–22 (MYAQEAQQKPEAQQSAPAAEQP) the composition is skewed to low complexity. The tract at residues 1-64 (MYAQEAQQKP…GEEEAGEHME (64 aa)) is disordered. 2 stretches are compositionally biased toward basic and acidic residues: residues 23–33 (KPAEEQAKPEQ) and 45–64 (ELSE…EHME). A helical transmembrane segment spans residues 85 to 105 (SYWIAMAFNFAIVFALLGWAM).

Belongs to the ATPase B chain family. F-type ATPases have 2 components, F(1) - the catalytic core - and F(0) - the membrane proton channel. F(1) has five subunits: alpha(3), beta(3), gamma(1), delta(1), epsilon(1). F(0) has three main subunits: a(1), b(2) and c(10-14). The alpha and beta chains form an alternating ring which encloses part of the gamma chain. F(1) is attached to F(0) by a central stalk formed by the gamma and epsilon chains, while a peripheral stalk is formed by the delta and b chains.

Its subcellular location is the cell inner membrane. Its function is as follows. F(1)F(0) ATP synthase produces ATP from ADP in the presence of a proton or sodium gradient. F-type ATPases consist of two structural domains, F(1) containing the extramembraneous catalytic core and F(0) containing the membrane proton channel, linked together by a central stalk and a peripheral stalk. During catalysis, ATP synthesis in the catalytic domain of F(1) is coupled via a rotary mechanism of the central stalk subunits to proton translocation. Component of the F(0) channel, it forms part of the peripheral stalk, linking F(1) to F(0). This is ATP synthase subunit b from Koribacter versatilis (strain Ellin345).